The following is a 716-amino-acid chain: Polyribonucleotide nucleotidyltransferase (716 aa).

Mg(2+)-binding residues include Asp495 and Asp501. The region spanning Pro562–Ile621 is the KH domain. The S1 motif domain occupies Gly631–Lys699.

It belongs to the polyribonucleotide nucleotidyltransferase family. Mg(2+) is required as a cofactor.

The protein resides in the cytoplasm. It carries out the reaction RNA(n+1) + phosphate = RNA(n) + a ribonucleoside 5'-diphosphate. Functionally, involved in mRNA degradation. Catalyzes the phosphorolysis of single-stranded polyribonucleotides processively in the 3'- to 5'-direction. This chain is Polyribonucleotide nucleotidyltransferase, found in Synechococcus sp. (strain ATCC 27144 / PCC 6301 / SAUG 1402/1) (Anacystis nidulans).